A 323-amino-acid chain; its full sequence is tRNA U34 carboxymethyltransferase (323 aa).

Carboxy-S-adenosyl-L-methionine is bound by residues Lys-91, Trp-105, Lys-110, Gly-130, Val-180–Glu-181, Met-196, Tyr-200, and Arg-315.

It belongs to the class I-like SAM-binding methyltransferase superfamily. CmoB family. Homotetramer.

The enzyme catalyses carboxy-S-adenosyl-L-methionine + 5-hydroxyuridine(34) in tRNA = 5-carboxymethoxyuridine(34) in tRNA + S-adenosyl-L-homocysteine + H(+). Its function is as follows. Catalyzes carboxymethyl transfer from carboxy-S-adenosyl-L-methionine (Cx-SAM) to 5-hydroxyuridine (ho5U) to form 5-carboxymethoxyuridine (cmo5U) at position 34 in tRNAs. The sequence is that of tRNA U34 carboxymethyltransferase from Trichlorobacter lovleyi (strain ATCC BAA-1151 / DSM 17278 / SZ) (Geobacter lovleyi).